We begin with the raw amino-acid sequence, 147 residues long: Truncated RecQ DNA helicase-like protein C212.06c (147 aa).

Positions 1 to 72 (MGVRLVVHYR…CVRSFLASEM (72 aa)) constitute a Helicase C-terminal domain. The segment at 100 to 147 (ETPKPAIATHSRYNASFSSSPPPQPGSSSGMSAMNTNTTSTTPVSGKT) is disordered. The span at 125 to 141 (GSSSGMSAMNTNTTSTT) shows a compositional bias: low complexity.

It belongs to the helicase family. RecQ subfamily.

Truncated ATP-dependent 3'-5' DNA helicase. The sequence is that of Truncated RecQ DNA helicase-like protein C212.06c from Schizosaccharomyces pombe (strain 972 / ATCC 24843) (Fission yeast).